The primary structure comprises 530 residues: Pentatricopeptide repeat-containing protein At5g56310 (530 aa).

PPR repeat units lie at residues 77–114 (NTYL…CAKP), 115–149 (DTFT…GFDS), 150–180 (SVHV…MLVK), 181–211 (DVNV…MPCW), 214–248 (NEVS…NVEP), 249–283 (DEVT…GMNR), 284–314 (AVSL…VNER), 315–349 (NVVT…GVRP), 350–380 (NDVT…MRSK), and 386–420 (NIEH…ANAA). A type E motif region spans residues 421–496 (IWGSLLAASN…MAGESSIEVE (76 aa)). Residues 497–527 (NRVYKFISGDLTHPQVERIHEILQEMDLQIQ) are type E(+) motif.

It belongs to the PPR family. PCMP-E subfamily.

The chain is Pentatricopeptide repeat-containing protein At5g56310 (PCMP-E13) from Arabidopsis thaliana (Mouse-ear cress).